We begin with the raw amino-acid sequence, 677 residues long: Fermitin family homolog 1 (677 aa).

The region spanning 96–653 (MLRLRLPNLK…HEYIGGYIFL (558 aa)) is the FERM domain. Phosphoserine is present on residues Ser170, Ser179, and Ser361. The PH domain maps to 377 to 473 (KLFRPKKLLP…WMAACMLASK (97 aa)).

It belongs to the kindlin family. In terms of assembly, interacts with the cytoplasmic domain of integrins ITGB1 and ITGB3. Expressed in brain, skeletal muscle, kidney, colon, adrenal gland, prostate, and placenta. Weakly or not expressed in heart, thymus, spleen, liver, small intestine, bone marrow, lung and peripheral blood leukocytes. Overexpressed in some colon and lung tumors. In skin, it is localized within the epidermis and particularly in basal keratocytes. Not detected in epidermal melanocytes and dermal fibroblasts.

It is found in the cytoplasm. It localises to the cytoskeleton. Its subcellular location is the cell junction. The protein resides in the focal adhesion. The protein localises to the cell projection. It is found in the ruffle membrane. Its function is as follows. Involved in cell adhesion. Contributes to integrin activation. When coexpressed with talin, potentiates activation of ITGA2B. Required for normal keratinocyte proliferation. Required for normal polarization of basal keratinocytes in skin, and for normal cell shape. Required for normal adhesion of keratinocytes to fibronectin and laminin, and for normal keratinocyte migration to wound sites. May mediate TGF-beta 1 signaling in tumor progression. This Homo sapiens (Human) protein is Fermitin family homolog 1 (FERMT1).